A 123-amino-acid polypeptide reads, in one-letter code: Small ribosomal subunit protein uS12c (123 aa).

The span at 1 to 16 (MPTIQQLIRNSRQPAE) shows a compositional bias: polar residues. A disordered region spans residues 1–23 (MPTIQQLIRNSRQPAENRTKSPA).

It belongs to the universal ribosomal protein uS12 family. As to quaternary structure, part of the 30S ribosomal subunit.

The protein localises to the plastid. It is found in the chloroplast. In terms of biological role, with S4 and S5 plays an important role in translational accuracy. Located at the interface of the 30S and 50S subunits. The polypeptide is Small ribosomal subunit protein uS12c (rps12) (Staurastrum punctulatum (Green alga)).